The sequence spans 426 residues: MVFIDNIYADEVLDSRGNPTVRATVILSDGTKGSAIVPSGASTGKREALELRDGDNRFLGKGVLKAVENVNTKIADELIGLSPFNQAEVDATMKDIDGTHNYSNLGANAVLGVSMATARAAANSLQIPLYRYLGGANAMTMPVPMFNIINGGEHANNSVDFQEYMIMPTGFENFNDGLRAVAEIYQHLKKVIDFMGESTAVGDEGGFAPNLKSNEEPISVIMSAIEKAGYKAGEQISIALDVAASELIDEKTKKYVLKGENRELTSAELVDYYADLCSKYPIVSIEDGLSEDDWDGWKILTEKLGSKVQLVGDDLFVTNASIVAEGIKKGIANAVLIKPNQIGTVSETMQTIRLAQRNNYNCIMSHRSGESEDAFIADFAVALNCGQIKTGSTARSDRIAKYNRLLEIGAEIGYAEYLGKQPFSKK.

Glutamine 162 contributes to the (2R)-2-phosphoglycerate binding site. Residue glutamate 204 is the Proton donor of the active site. Mg(2+) is bound by residues aspartate 241, glutamate 286, and aspartate 313. (2R)-2-phosphoglycerate is bound by residues lysine 338, arginine 367, serine 368, and lysine 389. Lysine 338 serves as the catalytic Proton acceptor.

This sequence belongs to the enolase family. Mg(2+) serves as cofactor.

It localises to the cytoplasm. The protein localises to the secreted. It is found in the cell surface. The catalysed reaction is (2R)-2-phosphoglycerate = phosphoenolpyruvate + H2O. The protein operates within carbohydrate degradation; glycolysis; pyruvate from D-glyceraldehyde 3-phosphate: step 4/5. Functionally, catalyzes the reversible conversion of 2-phosphoglycerate (2-PG) into phosphoenolpyruvate (PEP). It is essential for the degradation of carbohydrates via glycolysis. This chain is Enolase, found in Aliarcobacter butzleri (strain RM4018) (Arcobacter butzleri).